The following is a 506-amino-acid chain: MVVRPYNDELRYLEKVSDHCWRIKKGFQPNMNVEGCFYVNSRLERLMLEELKNSCRPGAVGGFLPGVKQIANVAALPGIVGRSIGLPDIHSGYGFAIGNMAAFDMNDPLSVVSPGGVGFDINCGVRLLRTNLYEKDVQPVKEQLAQSLFDHIPVGVGSKGIIPMNARDLEEALEMGMDWSLREGYVWAEDKEHCEEYGRMLNADPAKVSMRAKKRGLPQLGTLGAGNHYAEIQVVDEIYDKWSASKMGIEEKGQVVVMIHSGSRGFGHQVATDALVQMEKAMKRDKIETNDRQLACARINSVEGQDYLKAMAAAANFAWVNRSSMTFLTRQAFAKMFNTTPDDLDMHVIYDVSHNIAKVENHMVDGKERKLLVHRKGSTRAFPPHHPLIPVDYQLTGQPVLVGGTMGTCSYVLTGTEQGMQETFGSTCHGAGRALSRAKSRRNLDYKDVLDKLDQLGIAIRVASPKLVMEEAPESYKDVTDVVDTCHAAGISKKCIKMRPIAVIKG.

Residues aspartate 120, cysteine 123, histidine 228, histidine 260, and histidine 354 each contribute to the Mn(2+) site. GMP is bound at residue 227 to 231 (NHYAE). Residues 354-355 (HN), 403-406 (GGTM), serine 410, 429-432 (HGAG), and lysine 505 each bind GMP. Histidine 429 (GMP-histidine intermediate) is an active-site residue.

The protein belongs to the RtcB family. Catalytic component of the tRNA-splicing ligase complex. Requires Mn(2+) as cofactor.

The catalysed reaction is a 3'-end 3'-phospho-ribonucleotide-RNA + a 5'-end dephospho-ribonucleoside-RNA + GTP = a ribonucleotidyl-ribonucleotide-RNA + GMP + diphosphate. It catalyses the reaction a 3'-end 2',3'-cyclophospho-ribonucleotide-RNA + a 5'-end dephospho-ribonucleoside-RNA + GTP + H2O = a ribonucleotidyl-ribonucleotide-RNA + GMP + diphosphate + H(+). Functionally, catalytic subunit of the tRNA-splicing ligase complex that acts by directly joining spliced tRNA halves to mature-sized tRNAs by incorporating the precursor-derived splice junction phosphate into the mature tRNA as a canonical 3',5'-phosphodiester. May act as an RNA ligase with broad substrate specificity, and may function toward other RNAs. In Drosophila melanogaster (Fruit fly), this protein is RNA-splicing ligase RtcB homolog.